An 806-amino-acid polypeptide reads, in one-letter code: MLSRHLTVLRSACRVSHDLRVPSTQAVRKSAWSVCYSRRPLHISRSDAASTAALDMGVAPAVEKDHEILKELLDTRHSSGHVLSQGVPTGLFQIDHLRTPSDFLLLAQRTLIRCQLLVQRIARAIGNPSELARVVRNLDRLSDMLCGVIDMAELVRHAHPDQGWANAANDAYEYLCNYMNVLNTHTELYDALRCVMETKDIYHSLSQEAQAVAHIFMRDFEKSGIHLPPHERNRFVELSDQIMILGRAFLQDMSTGTSDTIVEFPTDLLDGMDTSIFAQNLFRLRPSKSIPVVPGSWELHYISKYAPNPQARRLAYMISYTGRTQPVAVLEQLLHARYELAKLTGKQSFAEMTLVDKMAGTPEHVLRFLRLLADAQRPVAQRMIAEFGQLKHALEGSSQVEIWDREYYADAYLQRHHPSQLAPLSPYLSLGSIFTGLSRLFYLLYGIHFRAAETLPGEVWHPDVLKLEVVDETESSVIGLIYCDLYTRDGKPPSAAHYTVRCSRRIDLDDTHLDMELGASADLPPVADTEHLLGVKGATGFGRPGRFQQPVVVLMTDFAPPNIGHGGACLLRWHDVETLFHEMGHAIHSMIGRTEFHNVSGTRCATDFVELPSILMEHFLTDPSVVALTAHHHRTGSPLPYVQLQKHLATQRSLDALDTHQQILLASLDQRYHSERAGAPTFSSSQELESLQADMGLFPPVSNATWQGQFGHLFGYGATYYSYLFDRAIAARVWEQVFAKKPLSREAGERFKMEVLRHGGGKSPWEMLSRLLHEDKIADGNAGAMEAIGRWGLGQNQSNETISAHL.

A mitochondrion-targeting transit peptide spans 1 to 29 (MLSRHLTVLRSACRVSHDLRVPSTQAVRK). H581 is a binding site for Zn(2+). E582 is a catalytic residue. The Zn(2+) site is built by H585 and H588.

The protein belongs to the peptidase M3 family. Zn(2+) serves as cofactor.

The protein resides in the mitochondrion matrix. The catalysed reaction is Release of an N-terminal octapeptide as second stage of processing of some proteins imported into the mitochondrion.. Functionally, cleaves proteins, imported into the mitochondrion, to their mature size. While most mitochondrial precursor proteins are processed to the mature form in one step by mitochondrial processing peptidase (MPP), the sequential cleavage by MIP of an octapeptide after initial processing by MPP is a required step for a subgroup of nuclear-encoded precursor proteins destined for the matrix or the inner membrane. This is Mitochondrial intermediate peptidase (OCT1) from Malassezia globosa (strain ATCC MYA-4612 / CBS 7966) (Dandruff-associated fungus).